Consider the following 463-residue polypeptide: Nitrogenase vanadium-iron protein beta chain (463 aa).

Residues cysteine 20, cysteine 45, cysteine 104, and serine 142 each coordinate [8Fe-7S] cluster.

It belongs to the NifD/NifK/NifE/NifN family. Hexamer of two alpha, two beta, and two delta chains. It depends on [8Fe-7S] cluster as a cofactor.

The catalysed reaction is N2 + 8 reduced [2Fe-2S]-[ferredoxin] + 16 ATP + 16 H2O = H2 + 8 oxidized [2Fe-2S]-[ferredoxin] + 2 NH4(+) + 16 ADP + 16 phosphate + 6 H(+). Functionally, this vanadium-iron protein is part of the nitrogenase complex that catalyzes the key enzymatic reactions in nitrogen fixation. This Trichormus variabilis (strain ATCC 29413 / PCC 7937) (Anabaena variabilis) protein is Nitrogenase vanadium-iron protein beta chain (vnfK).